The sequence spans 53 residues: uncharacterized protein (53 aa).

The protein localises to the plastid. Its subcellular location is the chloroplast. This is an uncharacterized protein from Guillardia theta (Cryptophyte).